The following is a 479-amino-acid chain: Adenylate kinase 8 (479 aa).

Adenylate kinase stretches follow at residues P58–Q258 and P269–I471. Position 67 to 72 (A67 to T72) interacts with ATP. An NMP 1 region spans residues T87–I113. AMP contacts are provided by residues G140–E143, Q147, and R203. Residues G177–Q206 are LID 1. G278–L283 contributes to the ATP binding site. The tract at residues S298–V327 is NMP 2. Residues M325–V327, G354–R357, and Q361 contribute to the AMP site. Residues L391 to D424 are LID 2. R392 contacts ATP.

Belongs to the adenylate kinase family. Interacts with CFAP45 and CFAP52; CFAP45 and AK8 dimerization may create a cavity at the interface of the dimer that can accommodate AMP.

The protein resides in the cytoplasm. It localises to the cytosol. It is found in the cytoskeleton. The protein localises to the cilium axoneme. The enzyme catalyses AMP + ATP = 2 ADP. The catalysed reaction is a 2'-deoxyribonucleoside 5'-diphosphate + ATP = a 2'-deoxyribonucleoside 5'-triphosphate + ADP. It catalyses the reaction a ribonucleoside 5'-diphosphate + ATP = a ribonucleoside 5'-triphosphate + ADP. Its function is as follows. Nucleoside monophosphate (NMP) kinase that catalyzes the reversible transfer of the terminal phosphate group between nucleoside triphosphates and monophosphates. Has highest activity toward AMP, and weaker activity toward dAMP, CMP and dCMP. Also displays broad nucleoside diphosphate kinase activity. In Mus musculus (Mouse), this protein is Adenylate kinase 8 (Ak8).